We begin with the raw amino-acid sequence, 589 residues long: Transmembrane 9 superfamily member 5 (589 aa).

An N-terminal signal peptide occupies residues 1 to 24; the sequence is MAQFLLTVLQVLLALTFWIGIGSG. Residues 25–227 lie on the Lumenal side of the membrane; the sequence is SSNHYNAGDH…SFHPISQKIH (203 aa). The chain crosses the membrane as a helical span at residues 228-248; the sequence is FFSFLNSITVVVLLIGLISFL. The Cytoplasmic segment spans residues 249-291; that stretch reads FMRHLKNELRSYSIGDEEERKEAGWKLVHSDVFRCPRNISWLC. A helical transmembrane segment spans residues 292–312; that stretch reads AILGTGTQLLILIIALFALAF. At 313–321 the chain is on the lumenal side; it reads TGFLYPYNR. A helical transmembrane segment spans residues 322 to 342; sequence GMLLTSLVIMYTLTSIVAGYT. Over 343-361 the chain is Cytoplasmic; it reads STSFHSQFEGNKQKRSVRL. A helical transmembrane segment spans residues 362-382; sequence AGILYPVPFFIILSVLNTVAI. At 383–394 the chain is on the lumenal side; sequence TYGATAALPFGT. Residues 395–415 traverse the membrane as a helical segment; the sequence is IVIIILIFTLLNIPFLMLGGV. Topologically, residues 416–450 are cytoplasmic; the sequence is LGNRFGLLEFQPPSAVKRNPREIPPQNWYRRKLYQ. The chain crosses the membrane as a helical span at residues 451 to 471; that stretch reads VFLGGFVPFSAVVLEWHQLYA. Over 472–482 the chain is Lumenal; the sequence is SLWGFKIYTSP. A helical membrane pass occupies residues 483 to 503; it reads GIMLFTFIVLIFLSSSVGIIL. The Cytoplasmic segment spans residues 504-518; sequence TYIQLSGEDHEWWWR. A helical transmembrane segment spans residues 519-539; sequence SILCGGFTAVFMYGYGVLFYL. Over 540-550 the chain is Lumenal; it reads RSDMTGFLQLS. Residues 551–571 form a helical membrane-spanning segment; sequence FYLGYTALLCYALFLVLGTIS. Residues 572 to 589 are Cytoplasmic-facing; that stretch reads FLASLMFIRHIYRSVKLE. Positions 578 to 583 match the Endoplasmic reticulum export signal motif; it reads FIRHIY. Positions 587–589 match the Golgi retention signal motif; it reads KLE.

Belongs to the nonaspanin (TM9SF) (TC 9.A.2) family. As to expression, expressed in the root cap and in giant cells.

It localises to the endosome membrane. It is found in the golgi apparatus membrane. This chain is Transmembrane 9 superfamily member 5, found in Arabidopsis thaliana (Mouse-ear cress).